We begin with the raw amino-acid sequence, 331 residues long: 5,10-methylenetetrahydromethanopterin reductase (331 aa).

This sequence belongs to the mer family.

Its subcellular location is the cytoplasm. It catalyses the reaction 5-methyl-5,6,7,8-tetrahydromethanopterin + oxidized coenzyme F420-(gamma-L-Glu)(n) + H(+) = 5,10-methylenetetrahydromethanopterin + reduced coenzyme F420-(gamma-L-Glu)(n). Its pathway is one-carbon metabolism; methanogenesis from CO(2); methyl-coenzyme M from 5,10-methylene-5,6,7,8-tetrahydromethanopterin: step 1/2. Catalyzes the reversible reduction of methylene-H(4)MPT to methyl-H(4)MPT. This chain is 5,10-methylenetetrahydromethanopterin reductase, found in Methanocaldococcus jannaschii (strain ATCC 43067 / DSM 2661 / JAL-1 / JCM 10045 / NBRC 100440) (Methanococcus jannaschii).